An 864-amino-acid polypeptide reads, in one-letter code: Seed linoleate 9S-lipoxygenase-2 (864 aa).

The 126-residue stretch at 46–171 (SGINIIGSTL…LYKSPRIFFA (126 aa)) folds into the PLAT domain. The Lipoxygenase domain occupies 174-864 (SYLPSETPSP…FRGIPNSISI (691 aa)). The segment at 230–264 (PILGGSSTHPYPRRGRTGRYPTRKDPNSEKPATET) is disordered. The span at 251–264 (TRKDPNSEKPATET) shows a compositional bias: basic and acidic residues. H524, H529, H716, N720, and I864 together coordinate Fe cation.

The protein belongs to the lipoxygenase family. Fe cation is required as a cofactor.

The protein resides in the cytoplasm. The catalysed reaction is (9Z,12Z)-octadecadienoate + O2 = (9S)-hydroperoxy-(10E,12Z)-octadecadienoate. Its pathway is lipid metabolism; oxylipin biosynthesis. Plant lipoxygenase may be involved in a number of diverse aspects of plant physiology including growth and development, pest resistance, and senescence or responses to wounding. It catalyzes the hydroperoxidation of lipids containing a cis,cis-1,4-pentadiene structure. The sequence is that of Seed linoleate 9S-lipoxygenase-2 (LOX1.2) from Pisum sativum (Garden pea).